We begin with the raw amino-acid sequence, 1279 residues long: Maestro heat-like repeat-containing protein family member 7 (1279 aa).

A disordered region spans residues 1–145 (MALSRGTSLI…NSSRPCSEDV (145 aa)). A compositionally biased stretch (low complexity) spans 39 to 61 (PDLALAPPPEHALALTPALHPAL). Polar residues-rich tracts occupy residues 71 to 106 (PVSN…NHTS) and 124 to 140 (PSST…SSRP). N-linked (GlcNAc...) asparagine glycosylation is found at Asn200, Asn210, Asn255, Asn267, and Asn296. Position 356 is a phosphoserine (Ser356). A glycan (N-linked (GlcNAc...) asparagine) is linked at Asn541. A run of 2 helical transmembrane segments spans residues 548-568 (TLVT…LLLG) and 722-742 (LLPI…ALLM). 4 HEAT repeats span residues 913 to 950 (QELC…MEQV), 992 to 1029 (AKVQ…GQGK), 1035 to 1072 (AVYV…KLQT), and 1080 to 1117 (EQLT…FMNW).

The protein resides in the membrane. This chain is Maestro heat-like repeat-containing protein family member 7 (Mroh7), found in Mus musculus (Mouse).